The primary structure comprises 227 residues: Ribosomal RNA large subunit methyltransferase E (227 aa).

Residues Gly-78, Trp-80, Asp-103, Asp-119, and Asp-143 each contribute to the S-adenosyl-L-methionine site. Catalysis depends on Lys-183, which acts as the Proton acceptor.

It belongs to the class I-like SAM-binding methyltransferase superfamily. RNA methyltransferase RlmE family.

It is found in the cytoplasm. The enzyme catalyses uridine(2552) in 23S rRNA + S-adenosyl-L-methionine = 2'-O-methyluridine(2552) in 23S rRNA + S-adenosyl-L-homocysteine + H(+). Its function is as follows. Specifically methylates the uridine in position 2552 of 23S rRNA at the 2'-O position of the ribose in the fully assembled 50S ribosomal subunit. In Rickettsia rickettsii (strain Iowa), this protein is Ribosomal RNA large subunit methyltransferase E.